A 1413-amino-acid chain; its full sequence is ABC transporter G family member 33 (1413 aa).

The span at 1-10 (MGSSFRSSSS) shows a compositional bias: low complexity. The tract at residues 1 to 21 (MGSSFRSSSSRNEHEDGGDEA) is disordered. Over residues 11–21 (RNEHEDGGDEA) the composition is skewed to basic and acidic residues. The 273-residue stretch at 140–412 (LKLSGVRTNE…FEECGFQCPE (273 aa)) folds into the ABC transporter 1 domain. 172–179 (GPPGCGKT) provides a ligand contact to ATP. The region spanning 490-702 (ELFRACISRE…AEIGLSVNEF (213 aa)) is the ABC transmembrane type-2 1 domain. 6 consecutive transmembrane segments (helical) span residues 509–529 (VYLF…TVFI), 546–566 (CLFF…SMTV), 580–600 (FYPA…LSFF), 626–646 (FMIL…IAAI), 652–672 (AAMT…GFAI), and 738–758 (LSAL…ALSF). One can recognise an ABC transporter 2 domain in the interval 813-1065 (ITFQDLNYYV…CVIEYFQNIP (253 aa)). Residue 858 to 865 (GISGAGKT) participates in ATP binding. Positions 1138–1352 (EQFKSCLWKM…TLNLFFSSQY (215 aa)) constitute an ABC transmembrane type-2 2 domain. The next 7 membrane-spanning stretches (helical) occupy residues 1157–1177 (YNLM…LLFW), 1189–1209 (LFTV…NNCT), 1245–1265 (IPYI…MIGF), 1276–1296 (LYAM…LISI), 1302–1322 (VAAI…GFLI), 1330–1350 (WWVW…FFSS), and 1385–1405 (ITAI…AFFV).

This sequence belongs to the ABC transporter superfamily. ABCG family. PDR (TC 3.A.1.205) subfamily. Expressed in roots and stems.

Its subcellular location is the membrane. In terms of biological role, may be a general defense protein. The polypeptide is ABC transporter G family member 33 (ABCG33) (Arabidopsis thaliana (Mouse-ear cress)).